The chain runs to 367 residues: Protein U67 (367 aa).

It belongs to the herpesviridae UL95 family.

This Elephantid herpesvirus 1 (isolate Asian elephant/Berlin/Kiba/1998) (EIHV-1) protein is Protein U67.